The sequence spans 104 residues: Large ribosomal subunit protein uL24 (104 aa).

It belongs to the universal ribosomal protein uL24 family. In terms of assembly, part of the 50S ribosomal subunit.

Functionally, one of two assembly initiator proteins, it binds directly to the 5'-end of the 23S rRNA, where it nucleates assembly of the 50S subunit. One of the proteins that surrounds the polypeptide exit tunnel on the outside of the subunit. The protein is Large ribosomal subunit protein uL24 of Methylorubrum populi (strain ATCC BAA-705 / NCIMB 13946 / BJ001) (Methylobacterium populi).